We begin with the raw amino-acid sequence, 248 residues long: 2,3-bisphosphoglycerate-dependent phosphoglycerate mutase (248 aa).

Residues 8–15 (RHGESEWN), 21–22 (TG), Arg60, 87–90 (ERHY), Lys98, 114–115 (RR), and 183–184 (GN) contribute to the substrate site. The Tele-phosphohistidine intermediate role is filled by His9. Glu87 serves as the catalytic Proton donor/acceptor.

The protein belongs to the phosphoglycerate mutase family. BPG-dependent PGAM subfamily.

The catalysed reaction is (2R)-2-phosphoglycerate = (2R)-3-phosphoglycerate. It participates in carbohydrate degradation; glycolysis; pyruvate from D-glyceraldehyde 3-phosphate: step 3/5. Its function is as follows. Catalyzes the interconversion of 2-phosphoglycerate and 3-phosphoglycerate. This chain is 2,3-bisphosphoglycerate-dependent phosphoglycerate mutase, found in Borreliella burgdorferi (strain ATCC 35210 / DSM 4680 / CIP 102532 / B31) (Borrelia burgdorferi).